We begin with the raw amino-acid sequence, 115 residues long: Guanylin (115 aa).

The first 21 residues, 1–21 (MNAFLLSALCLLGAWAALAGG), serve as a signal peptide directing secretion. Cystine bridges form between cysteine 69/cysteine 82, cysteine 104/cysteine 112, and cysteine 107/cysteine 115.

The protein belongs to the guanylin family. Highly expressed in ileum and colon. Found in plasma.

The protein resides in the secreted. Functionally, endogenous activator of intestinal guanylate cyclase. It stimulates this enzyme through the same receptor binding region as the heat-stable enterotoxins. The polypeptide is Guanylin (GUCA2A) (Homo sapiens (Human)).